The primary structure comprises 258 residues: Deoxyribose-phosphate aldolase (258 aa).

Asp102 serves as the catalytic Proton donor/acceptor. Lys165 functions as the Schiff-base intermediate with acetaldehyde in the catalytic mechanism. Lys199 (proton donor/acceptor) is an active-site residue.

It belongs to the DeoC/FbaB aldolase family. DeoC type 2 subfamily.

It is found in the cytoplasm. The enzyme catalyses 2-deoxy-D-ribose 5-phosphate = D-glyceraldehyde 3-phosphate + acetaldehyde. Its pathway is carbohydrate degradation; 2-deoxy-D-ribose 1-phosphate degradation; D-glyceraldehyde 3-phosphate and acetaldehyde from 2-deoxy-alpha-D-ribose 1-phosphate: step 2/2. Catalyzes a reversible aldol reaction between acetaldehyde and D-glyceraldehyde 3-phosphate to generate 2-deoxy-D-ribose 5-phosphate. The polypeptide is Deoxyribose-phosphate aldolase (Aliivibrio fischeri (strain ATCC 700601 / ES114) (Vibrio fischeri)).